A 492-amino-acid chain; its full sequence is N-succinylglutamate 5-semialdehyde dehydrogenase (492 aa).

220–225 contacts NAD(+); the sequence is GSANTG. Catalysis depends on residues glutamate 243 and cysteine 277.

This sequence belongs to the aldehyde dehydrogenase family. AstD subfamily.

It catalyses the reaction N-succinyl-L-glutamate 5-semialdehyde + NAD(+) + H2O = N-succinyl-L-glutamate + NADH + 2 H(+). Its pathway is amino-acid degradation; L-arginine degradation via AST pathway; L-glutamate and succinate from L-arginine: step 4/5. Functionally, catalyzes the NAD-dependent reduction of succinylglutamate semialdehyde into succinylglutamate. This chain is N-succinylglutamate 5-semialdehyde dehydrogenase, found in Escherichia fergusonii (strain ATCC 35469 / DSM 13698 / CCUG 18766 / IAM 14443 / JCM 21226 / LMG 7866 / NBRC 102419 / NCTC 12128 / CDC 0568-73).